A 119-amino-acid polypeptide reads, in one-letter code: Large ribosomal subunit protein bL19 (119 aa).

The protein belongs to the bacterial ribosomal protein bL19 family.

This protein is located at the 30S-50S ribosomal subunit interface and may play a role in the structure and function of the aminoacyl-tRNA binding site. This chain is Large ribosomal subunit protein bL19, found in Pelobacter propionicus (strain DSM 2379 / NBRC 103807 / OttBd1).